Reading from the N-terminus, the 365-residue chain is MSGNTFGTLFKVTTFGESHGLALGAIVDGCPPGIELCEADLQRDLDLRKPGTSKHTTQRREADEVKIMSGVFEGKTTGTPIGLIIENTDQRSKDYGNIADTFRPAHADYTYDQKYGFRDYRGGGRSSARETAMRVAAGAIAKKYLKQQFGIEIQGFLSQLGPIKLEVKDLSQVYDNSFFSPDPDAIPELEEYMTALRREGDSVGAKITVIAKNVMPGLGAPVFDRLDADIAKAIMSINAVKGVEIGDGFDVVEQKGSQHRDEMTPEGFLSNHAGGVLGGISSGQDIVVHMALKPTSSITIPGKSIDRAGNPIEVITKGRHDPCVGIRATPIAEAMLAITIIDHLLRHRAQNADVVCSTPIINGQA.

Arg-48 lines the NADP(+) pocket. FMN is bound by residues 125–127 (RSS), 238–239 (NA), Gly-278, 293–297 (KPTSS), and Arg-319.

It belongs to the chorismate synthase family. In terms of assembly, homotetramer. FMNH2 serves as cofactor.

The catalysed reaction is 5-O-(1-carboxyvinyl)-3-phosphoshikimate = chorismate + phosphate. It functions in the pathway metabolic intermediate biosynthesis; chorismate biosynthesis; chorismate from D-erythrose 4-phosphate and phosphoenolpyruvate: step 7/7. Catalyzes the anti-1,4-elimination of the C-3 phosphate and the C-6 proR hydrogen from 5-enolpyruvylshikimate-3-phosphate (EPSP) to yield chorismate, which is the branch point compound that serves as the starting substrate for the three terminal pathways of aromatic amino acid biosynthesis. This reaction introduces a second double bond into the aromatic ring system. This Marinomonas sp. (strain MWYL1) protein is Chorismate synthase.